The sequence spans 94 residues: Co-chaperonin GroES (94 aa).

It belongs to the GroES chaperonin family. In terms of assembly, heptamer of 7 subunits arranged in a ring. Interacts with the chaperonin GroEL.

The protein localises to the cytoplasm. Functionally, together with the chaperonin GroEL, plays an essential role in assisting protein folding. The GroEL-GroES system forms a nano-cage that allows encapsulation of the non-native substrate proteins and provides a physical environment optimized to promote and accelerate protein folding. GroES binds to the apical surface of the GroEL ring, thereby capping the opening of the GroEL channel. The polypeptide is Co-chaperonin GroES (Bacillus sp. (strain PS3)).